The chain runs to 547 residues: Nitrosoguanidine resistance protein SNG1 (547 aa).

The tract at residues 35–86 (NQRFAEGSGHSSDLAKSLEDYRPPDEKPSSLSSVGEGGANEEEKGGNDGGPL) is disordered. Residues 50 to 62 (KSLEDYRPPDEKP) show a composition bias toward basic and acidic residues. Phosphothreonine is present on threonine 91. Transmembrane regions (helical) follow at residues 109-129 (FVLNNFFIACVCVSLISIYWG), 159-179 (ISAIIPSLLASVPGTWHIYNA), 318-338 (ILMAPLQVGLIYCILLTVLQL), 363-383 (LISWATYFLLSIGFCTVSAIF), 394-414 (GGFVVYWMSTWLVMMAVGGAN), 418-438 (LSLVIAYCPPYLSIWLMTWII), 457-477 (YGYIMPIHNAVDIYKVIFLNL), and 488-508 (ILVAWVALNTSLMPFCMKFAG). The segment covering 526–536 (ATQRASRPAEA) has biased composition (low complexity). The interval 526–547 (ATQRASRPAEANTDKNNNPPGN) is disordered.

It to yeast YJR015W.

The protein resides in the membrane. In terms of biological role, may function as a N-methyl-N'nitro-N-nitrosoguanidine (MNNG) export permease. This is Nitrosoguanidine resistance protein SNG1 (SNG1) from Saccharomyces cerevisiae (strain ATCC 204508 / S288c) (Baker's yeast).